A 116-amino-acid chain; its full sequence is NADH-quinone oxidoreductase subunit A (116 aa).

3 helical membrane passes run 3-23 (FTFLVVVLLTALAFVGVVIAL), 61-81 (FAILFLMFDVETAFLFPWAVV), and 88-108 (QGLVSILFFFIILVLGLAYAW).

Belongs to the complex I subunit 3 family. In terms of assembly, NDH-1 is composed of 14 different subunits. Subunits NuoA, H, J, K, L, M, N constitute the membrane sector of the complex.

The protein resides in the cell inner membrane. It catalyses the reaction a quinone + NADH + 5 H(+)(in) = a quinol + NAD(+) + 4 H(+)(out). Its function is as follows. NDH-1 shuttles electrons from NADH, via FMN and iron-sulfur (Fe-S) centers, to quinones in the respiratory chain. The immediate electron acceptor for the enzyme in this species is believed to be a menaquinone. Couples the redox reaction to proton translocation (for every two electrons transferred, four hydrogen ions are translocated across the cytoplasmic membrane), and thus conserves the redox energy in a proton gradient. This chain is NADH-quinone oxidoreductase subunit A, found in Bacteroides thetaiotaomicron (strain ATCC 29148 / DSM 2079 / JCM 5827 / CCUG 10774 / NCTC 10582 / VPI-5482 / E50).